A 102-amino-acid chain; its full sequence is Small ribosomal subunit protein uS10 (102 aa).

The protein belongs to the universal ribosomal protein uS10 family. In terms of assembly, part of the 30S ribosomal subunit.

Involved in the binding of tRNA to the ribosomes. This is Small ribosomal subunit protein uS10 from Nitrosopumilus maritimus (strain SCM1).